The chain runs to 89 residues: Small ribosomal subunit protein uS14 (89 aa).

This sequence belongs to the universal ribosomal protein uS14 family. In terms of assembly, part of the 30S ribosomal subunit. Contacts proteins S3 and S10.

Binds 16S rRNA, required for the assembly of 30S particles and may also be responsible for determining the conformation of the 16S rRNA at the A site. The chain is Small ribosomal subunit protein uS14 from Flavobacterium psychrophilum (strain ATCC 49511 / DSM 21280 / CIP 103535 / JIP02/86).